A 343-amino-acid polypeptide reads, in one-letter code: Heme A synthase (343 aa).

The next 8 membrane-spanning stretches (helical) occupy residues 13 to 33 (VALW…VGGA), 96 to 116 (HRLL…FFLI), 130 to 150 (VLLG…SSGL), 165 to 185 (LGLA…AWAG), 197 to 217 (GWAL…ALVA), 258 to 278 (LHHR…GVAA), 290 to 310 (LTAF…IWTL), and 311 to 331 (MTAV…ILLA). His260 contributes to the heme binding site. Residue His322 coordinates heme.

It belongs to the COX15/CtaA family. Type 2 subfamily. As to quaternary structure, interacts with CtaB. It depends on heme b as a cofactor.

The protein localises to the cell membrane. It catalyses the reaction Fe(II)-heme o + 2 A + H2O = Fe(II)-heme a + 2 AH2. Its pathway is porphyrin-containing compound metabolism; heme A biosynthesis; heme A from heme O: step 1/1. Functionally, catalyzes the conversion of heme O to heme A by two successive hydroxylations of the methyl group at C8. The first hydroxylation forms heme I, the second hydroxylation results in an unstable dihydroxymethyl group, which spontaneously dehydrates, resulting in the formyl group of heme A. This is Heme A synthase from Caulobacter sp. (strain K31).